A 577-amino-acid polypeptide reads, in one-letter code: Isocitrate dehydrogenase kinase/phosphatase (577 aa).

ATP-binding positions include 318–324 and Lys339; that span reads APGVRGM. Residue Asp374 is part of the active site.

Belongs to the AceK family.

The protein resides in the cytoplasm. The catalysed reaction is L-seryl-[isocitrate dehydrogenase] + ATP = O-phospho-L-seryl-[isocitrate dehydrogenase] + ADP + H(+). Its function is as follows. Bifunctional enzyme which can phosphorylate or dephosphorylate isocitrate dehydrogenase (IDH) on a specific serine residue. This is a regulatory mechanism which enables bacteria to bypass the Krebs cycle via the glyoxylate shunt in response to the source of carbon. When bacteria are grown on glucose, IDH is fully active and unphosphorylated, but when grown on acetate or ethanol, the activity of IDH declines drastically concomitant with its phosphorylation. In Pseudomonas aeruginosa (strain LESB58), this protein is Isocitrate dehydrogenase kinase/phosphatase.